Reading from the N-terminus, the 423-residue chain is Enolase (423 aa).

Q163 provides a ligand contact to (2R)-2-phosphoglycerate. E205 functions as the Proton donor in the catalytic mechanism. The Mg(2+) site is built by D242, E285, and D312. K337, R366, S367, and K388 together coordinate (2R)-2-phosphoglycerate. K337 acts as the Proton acceptor in catalysis.

Belongs to the enolase family. The cofactor is Mg(2+).

The protein resides in the cytoplasm. It is found in the secreted. Its subcellular location is the cell surface. The catalysed reaction is (2R)-2-phosphoglycerate = phosphoenolpyruvate + H2O. Its pathway is carbohydrate degradation; glycolysis; pyruvate from D-glyceraldehyde 3-phosphate: step 4/5. Its function is as follows. Catalyzes the reversible conversion of 2-phosphoglycerate (2-PG) into phosphoenolpyruvate (PEP). It is essential for the degradation of carbohydrates via glycolysis. This chain is Enolase, found in Desulforapulum autotrophicum (strain ATCC 43914 / DSM 3382 / VKM B-1955 / HRM2) (Desulfobacterium autotrophicum).